The sequence spans 268 residues: MVLEATVLVIDNSEYSRNGDFPRTRFEAQIDSVEFIFQAKRNSNPENTVGLISGAGANPRVLSTFTAEFGKILAGLHDTQIEGKLHMATALQIAQLTLKHRQNKVQHQRIVAFVCSPISDSRDELIRLAKTLKKNNVAVDIINFGEIEQNTELLDEFIAAVNNPQEETSHLLTVTPGPRLLYENIASSPIILEEGSSGMGAFGGSGGDSDANGTFMDFGVDPSMDPELAMALRLSMEEEQQRQERLRQQQQQQDQPEQSEQPEQHQDK.

Residues 5-190 (ATVLVIDNSE…LYENIASSPI (186 aa)) form the VWFA domain. In terms of domain architecture, UIM spans 223–242 (SMDPELAMALRLSMEEEQQR). The disordered stretch occupies residues 226 to 268 (PELAMALRLSMEEEQQRQERLRQQQQQQDQPEQSEQPEQHQDK). Residues 235–247 (SMEEEQQRQERLR) show a composition bias toward basic and acidic residues. Over residues 248-261 (QQQQQQDQPEQSEQ) the composition is skewed to low complexity.

It belongs to the proteasome subunit S5A family. In terms of assembly, the 26S proteasome is composed of a core protease, known as the 20S proteasome, capped at one or both ends by the 19S regulatory complex (RC). The RC is composed of at least 18 different subunits in two subcomplexes, the base and the lid, which form the portions proximal and distal to the 20S proteolytic core, respectively. In terms of processing, ubiquitinated, leading to its degradation. Ubiquitination is promoted by HUL5.

Its function is as follows. Multiubiquitin binding protein. The polypeptide is 26S proteasome regulatory subunit RPN10 (RPN10) (Saccharomyces cerevisiae (strain ATCC 204508 / S288c) (Baker's yeast)).